The primary structure comprises 198 residues: Mediator of RNA polymerase II transcription subunit 22 (198 aa).

The interval 159-198 (WGSPEMTSDPSHANHEVSDHLGSQESMQRHRNGSGTSEQS) is disordered.

The protein belongs to the Mediator complex subunit 22 family. As to quaternary structure, component of the Mediator complex.

The protein localises to the nucleus. Its function is as follows. Component of the Mediator complex, a coactivator involved in the regulated transcription of nearly all RNA polymerase II-dependent genes. Mediator functions as a bridge to convey information from gene-specific regulatory proteins to the basal RNA polymerase II transcription machinery. Mediator is recruited to promoters by direct interactions with regulatory proteins and serves as a scaffold for the assembly of a functional preinitiation complex with RNA polymerase II and the general transcription factors. This Danio rerio (Zebrafish) protein is Mediator of RNA polymerase II transcription subunit 22 (med22).